A 444-amino-acid polypeptide reads, in one-letter code: MGGGGQQTDRITDTNGRFSSYTWEEVQKHTKHGDQWVVVERKVYNVSQWVKRHPGGLRILGHYAGEDATEAFTAFHPNLQLVRKYLKPLLIGELEASEPSQDRQKNAALVEDFRALRERLEAEGCFKTQPLFFALHLGHILLLEAIAFMMVWYFGTGWINTLIVAVILATAQSQAGWLQHDFGHLSVFKTSGMNHLVHKFVIGHLKGASAGWWNHRHFQHHAKPNIFKKDPDVNMLNAFVVGNVQPVEYGVKKIKHLPYNHQHKYFFFIGPPLLIPVYFQFQIFHNMISHGMWVDLLWCISYYVRYFLCYTQFYGVFWAIILFNFVRFMESHWFVWVTQMSHIPMNIDYEKNQDWLSMQLVATCNIEQSAFNDWFSGHLNFQIEHHLFPTVPRHNYWRAAPRVRALCEKYGVKYQEKTLYGAFADIIRSLEKSGELWLDAYLNK.

Over 1-130 (MGGGGQQTDR…EAEGCFKTQP (130 aa)) the chain is Cytoplasmic. The region spanning 18-95 (FSSYTWEEVQ…LKPLLIGELE (78 aa)) is the Cytochrome b5 heme-binding domain. Residues 131–151 (LFFALHLGHILLLEAIAFMMV) form a helical membrane-spanning segment. Residues 152-157 (WYFGTG) are Lumenal-facing. The helical transmembrane segment at 158-178 (WINTLIVAVILATAQSQAGWL) threads the bilayer. Over 179-264 (QHDFGHLSVF…KHLPYNHQHK (86 aa)) the chain is Cytoplasmic. A Histidine box-1 motif is present at residues 180–184 (HDFGH). Positions 217–221 (HFQHH) match the Histidine box-2 motif. The chain crosses the membrane as a helical span at residues 265–285 (YFFFIGPPLLIPVYFQFQIFH). Residues 286–305 (NMISHGMWVDLLWCISYYVR) are Lumenal-facing. The helical transmembrane segment at 306–326 (YFLCYTQFYGVFWAIILFNFV) threads the bilayer. The Cytoplasmic segment spans residues 327–444 (RFMESHWFVW…ELWLDAYLNK (118 aa)). Residues 382-386 (QIEHH) carry the Histidine box-3 motif.

The protein belongs to the fatty acid desaturase type 1 family.

It localises to the endoplasmic reticulum membrane. The enzyme catalyses (9Z,12Z)-octadecadienoyl-CoA + 2 Fe(II)-[cytochrome b5] + O2 + 2 H(+) = (6Z,9Z,12Z)-octadecatrienoyl-CoA + 2 Fe(III)-[cytochrome b5] + 2 H2O. The catalysed reaction is (9Z,12Z,15Z)-octadecatrienoyl-CoA + 2 Fe(II)-[cytochrome b5] + O2 + 2 H(+) = (6Z,9Z,12Z,15Z)-octadecatetraenoyl-CoA + 2 Fe(III)-[cytochrome b5] + 2 H2O. It catalyses the reaction (8Z,11Z,14Z,17Z)-eicosatetraenoyl-CoA + 2 Fe(II)-[cytochrome b5] + O2 + 2 H(+) = (5Z,8Z,11Z,14Z,17Z)-eicosapentaenoyl-CoA + 2 Fe(III)-[cytochrome b5] + 2 H2O. It carries out the reaction (8Z,11Z,14Z)-eicosatrienoyl-CoA + 2 Fe(II)-[cytochrome b5] + O2 + 2 H(+) = (5Z,8Z,11Z,14Z)-eicosatetraenoyl-CoA + 2 Fe(III)-[cytochrome b5] + 2 H2O. The protein operates within lipid metabolism; polyunsaturated fatty acid biosynthesis. Its function is as follows. Fatty acid desaturase with bifunctional delta-5 and delta-6 activities. Component of a lipid metabolic pathway that catalyzes the biosynthesis of polyunsaturated fatty acids (PUFA) with preference toward n-3 substrates and Delta-6 function. In Danio rerio (Zebrafish), this protein is Acyl-CoA 6-desaturase (fads2).